Here is a 187-residue protein sequence, read N- to C-terminus: Keratin-associated protein 5-8 (187 aa).

Tandem repeats lie at residues 28–31 (CCVP), 34–37 (CCKP), 40–43 (CCVP), 109–112 (CCKP), 119–122 (CCKP), 138–141 (CCKP), 148–151 (CCKP), 167–170 (CCKP), and 177–180 (CCVP). The interval 28 to 180 (CCVPICCCKP…CCSQSSCCVP (153 aa)) is 9 X 4 AA repeats of C-C-X-P.

This sequence belongs to the KRTAP type 5 family. In terms of tissue distribution, restricted to hair root, not detected in any other tissues. Expressed in cuticle layers of differentiating hair follicles.

Functionally, in the hair cortex, hair keratin intermediate filaments are embedded in an interfilamentous matrix, consisting of hair keratin-associated protein (KRTAP), which are essential for the formation of a rigid and resistant hair shaft through their extensive disulfide bond cross-linking with abundant cysteine residues of hair keratins. The matrix proteins include the high-sulfur and high-glycine-tyrosine keratins. The protein is Keratin-associated protein 5-8 (KRTAP5-8) of Homo sapiens (Human).